Here is a 478-residue protein sequence, read N- to C-terminus: 3-isopropylmalate dehydratase large subunit (478 aa).

[4Fe-4S] cluster-binding residues include Cys355, Cys415, and Cys418.

It belongs to the aconitase/IPM isomerase family. LeuC type 1 subfamily. In terms of assembly, heterodimer of LeuC and LeuD. [4Fe-4S] cluster is required as a cofactor.

It catalyses the reaction (2R,3S)-3-isopropylmalate = (2S)-2-isopropylmalate. It functions in the pathway amino-acid biosynthesis; L-leucine biosynthesis; L-leucine from 3-methyl-2-oxobutanoate: step 2/4. Its function is as follows. Catalyzes the isomerization between 2-isopropylmalate and 3-isopropylmalate, via the formation of 2-isopropylmaleate. The sequence is that of 3-isopropylmalate dehydratase large subunit from Paracoccus denitrificans (strain Pd 1222).